A 199-amino-acid chain; its full sequence is Probable molybdenum cofactor guanylyltransferase (199 aa).

GTP-binding positions include 6–8 (LAG), K18, D65, and D97. D97 serves as a coordination point for Mg(2+).

It belongs to the MobA family. Mg(2+) is required as a cofactor.

It is found in the cytoplasm. The enzyme catalyses Mo-molybdopterin + GTP + H(+) = Mo-molybdopterin guanine dinucleotide + diphosphate. Functionally, transfers a GMP moiety from GTP to Mo-molybdopterin (Mo-MPT) cofactor (Moco or molybdenum cofactor) to form Mo-molybdopterin guanine dinucleotide (Mo-MGD) cofactor. The chain is Probable molybdenum cofactor guanylyltransferase from Staphylococcus aureus (strain Mu50 / ATCC 700699).